Reading from the N-terminus, the 145-residue chain is 3-hydroxyacyl-[acyl-carrier-protein] dehydratase FabZ (145 aa).

The active site involves His49.

The protein belongs to the thioester dehydratase family. FabZ subfamily.

The protein localises to the cytoplasm. The enzyme catalyses a (3R)-hydroxyacyl-[ACP] = a (2E)-enoyl-[ACP] + H2O. Involved in unsaturated fatty acids biosynthesis. Catalyzes the dehydration of short chain beta-hydroxyacyl-ACPs and long chain saturated and unsaturated beta-hydroxyacyl-ACPs. The sequence is that of 3-hydroxyacyl-[acyl-carrier-protein] dehydratase FabZ from Anaplasma phagocytophilum (strain HZ).